A 346-amino-acid chain; its full sequence is MTEQRTIASSATREDEAADASIRPKRLADYLGQQPVRDQMEIYIQAAKARGEAMDHVLIFGPPGLGKTTLSHVIANELGVNLRVTSGPVIEKAGDLAALLTNLQPHDVLFIDEIHRLSPVVEEVLYPAMEDFQIDIMIGDGPAARSIKIDLPPFTLIGATTRAGLLTAPLRDRFGIVQRLEFYSPQELTRIVIRSAAILGIDCTPDGAAEIARRARGTPRIANRLLRRVRDFAQVKAAGHIDLAVAQAAMQMLKVDPEGFDELDRRMLRTIVDHFDGGPVGVESLAASLSEERGTLEDVIEPYLIQQGFLIRTARGRMVTPKAYLHLGLKPPRDRAPAIGEPGDLF.

The span at 1–11 (MTEQRTIASSA) shows a compositional bias: polar residues. The segment at 1-20 (MTEQRTIASSATREDEAADA) is disordered. The interval 1-183 (MTEQRTIASS…FGIVQRLEFY (183 aa)) is large ATPase domain (RuvB-L). ATP-binding positions include Ile22, Arg23, Gly64, Lys67, Thr68, Thr69, 130-132 (EDF), Arg173, Tyr183, and Arg220. Thr68 is a Mg(2+) binding site. The segment at 184 to 254 (SPQELTRIVI…VAQAAMQMLK (71 aa)) is small ATPAse domain (RuvB-S). Residues 257–346 (PEGFDELDRR…PAIGEPGDLF (90 aa)) are head domain (RuvB-H). Positions 293, 312, and 317 each coordinate DNA.

The protein belongs to the RuvB family. In terms of assembly, homohexamer. Forms an RuvA(8)-RuvB(12)-Holliday junction (HJ) complex. HJ DNA is sandwiched between 2 RuvA tetramers; dsDNA enters through RuvA and exits via RuvB. An RuvB hexamer assembles on each DNA strand where it exits the tetramer. Each RuvB hexamer is contacted by two RuvA subunits (via domain III) on 2 adjacent RuvB subunits; this complex drives branch migration. In the full resolvosome a probable DNA-RuvA(4)-RuvB(12)-RuvC(2) complex forms which resolves the HJ.

It is found in the cytoplasm. It catalyses the reaction ATP + H2O = ADP + phosphate + H(+). The RuvA-RuvB-RuvC complex processes Holliday junction (HJ) DNA during genetic recombination and DNA repair, while the RuvA-RuvB complex plays an important role in the rescue of blocked DNA replication forks via replication fork reversal (RFR). RuvA specifically binds to HJ cruciform DNA, conferring on it an open structure. The RuvB hexamer acts as an ATP-dependent pump, pulling dsDNA into and through the RuvAB complex. RuvB forms 2 homohexamers on either side of HJ DNA bound by 1 or 2 RuvA tetramers; 4 subunits per hexamer contact DNA at a time. Coordinated motions by a converter formed by DNA-disengaged RuvB subunits stimulates ATP hydrolysis and nucleotide exchange. Immobilization of the converter enables RuvB to convert the ATP-contained energy into a lever motion, pulling 2 nucleotides of DNA out of the RuvA tetramer per ATP hydrolyzed, thus driving DNA branch migration. The RuvB motors rotate together with the DNA substrate, which together with the progressing nucleotide cycle form the mechanistic basis for DNA recombination by continuous HJ branch migration. Branch migration allows RuvC to scan DNA until it finds its consensus sequence, where it cleaves and resolves cruciform DNA. This is Holliday junction branch migration complex subunit RuvB from Xanthomonas campestris pv. campestris (strain 8004).